The primary structure comprises 414 residues: Na(+)-translocating NADH-quinone reductase subunit B (414 aa).

4 consecutive transmembrane segments (helical) span residues 56–76 (IMIM…YNVG), 82–104 (ALNH…HYWL), 129–149 (FLPI…LFCM), and 164–184 (ILFA…LGIT). T236 carries the FMN phosphoryl threonine modification. The next 5 membrane-spanning stretches (helical) occupy residues 275-295 (VSTL…IASW), 297-317 (IIAG…VIGS), 325-345 (MPWH…FMAT), 358-378 (WAYG…NPAY), and 381-401 (GMML…HIVI).

This sequence belongs to the NqrB/RnfD family. Composed of six subunits; NqrA, NqrB, NqrC, NqrD, NqrE and NqrF. FMN is required as a cofactor.

It localises to the cell inner membrane. It carries out the reaction a ubiquinone + n Na(+)(in) + NADH + H(+) = a ubiquinol + n Na(+)(out) + NAD(+). Its function is as follows. NQR complex catalyzes the reduction of ubiquinone-1 to ubiquinol by two successive reactions, coupled with the transport of Na(+) ions from the cytoplasm to the periplasm. NqrA to NqrE are probably involved in the second step, the conversion of ubisemiquinone to ubiquinol. The sequence is that of Na(+)-translocating NADH-quinone reductase subunit B from Vibrio anguillarum (Listonella anguillarum).